Reading from the N-terminus, the 252-residue chain is uncharacterized protein (252 aa).

Position 28–35 (28–35 (GCDGTGKS)) interacts with ATP.

It to E.coli YghS and YghT.

This is an uncharacterized protein from Escherichia coli O6:H1 (strain CFT073 / ATCC 700928 / UPEC).